Reading from the N-terminus, the 340-residue chain is Selenide, water dikinase (340 aa).

Cysteine 13 is an active-site residue. Residues lysine 16 and 43 to 45 (ASD) contribute to the ATP site. Aspartate 46 provides a ligand contact to Mg(2+). Residues aspartate 63, aspartate 86, and 133 to 135 (GHS) contribute to the ATP site. Aspartate 86 lines the Mg(2+) pocket. Residue aspartate 221 coordinates Mg(2+).

It belongs to the selenophosphate synthase 1 family. Class I subfamily. In terms of assembly, homodimer. It depends on Mg(2+) as a cofactor.

It catalyses the reaction hydrogenselenide + ATP + H2O = selenophosphate + AMP + phosphate + 2 H(+). In terms of biological role, synthesizes selenophosphate from selenide and ATP. In Desulfitobacterium hafniense (strain Y51), this protein is Selenide, water dikinase.